Consider the following 130-residue polypeptide: Small ribosomal subunit protein uS9 (130 aa).

The protein belongs to the universal ribosomal protein uS9 family.

This chain is Small ribosomal subunit protein uS9, found in Desulfosudis oleivorans (strain DSM 6200 / JCM 39069 / Hxd3) (Desulfococcus oleovorans).